A 55-amino-acid polypeptide reads, in one-letter code: Large ribosomal subunit protein bL32c (55 aa).

It belongs to the bacterial ribosomal protein bL32 family.

Its subcellular location is the plastid. It is found in the chloroplast. The protein is Large ribosomal subunit protein bL32c of Nicotiana sylvestris (Wood tobacco).